The following is a 648-amino-acid chain: Mitochondrial Rho GTPase 3 (648 aa).

Over 1–621 (MWMGVGDSSG…KRSCKLNNRS (621 aa)) the chain is Cytoplasmic. Ser-11 is modified (phosphoserine). One can recognise a Miro 1 domain in the interval 12 to 179 (PKPIRIVVVG…LYYAQKAVID (168 aa)). 2 consecutive EF-hand domains span residues 195–230 (RCIA…CFDT) and 316–351 (VAIE…APES). Residues Asp-208, Asn-210, Asp-212, Glu-219, Asp-329, Asn-331, Asp-333, Asn-335, and Glu-340 each contribute to the Ca(2+) site. The Miro 2 domain maps to 425–599 (RKVVQCFVFG…FRKILTAAEN (175 aa)). Residues 622-644 (LMAVSIGTAVLIAGLASFRLYTA) traverse the membrane as a helical segment. At 645-648 (RKQS) the chain is on the mitochondrial intermembrane side.

Belongs to the mitochondrial Rho GTPase family. As to expression, expressed at very low levels in roots, leaves, stems, flowers and siliques.

The protein localises to the mitochondrion outer membrane. Functionally, mitochondrial GTPase that may be involved in mitochondrion development. In Arabidopsis thaliana (Mouse-ear cress), this protein is Mitochondrial Rho GTPase 3.